The sequence spans 329 residues: MKNIHVLLLCGGGGSEHEVSLRSANFLEKQLSLLPGVEVTRVEMFADRWLSADGRECKLGLDKLLSFDSVARPVDYVVPCIHGYPGETGDLQSFLELAGLPYLGCDAEASKICFNKISTKLWLSAIGIPNTPYLFLTEQNDAALSEAKAALAKWGKVFIKAASQGSSVGCYSASNEADLVKGIADAFGYSEQVLIEKAVKPRELEVAVYQYGDELVATYPGEICVPQDKFYTYEEKYSSASHTETALRAEGLTQAQADAIHEYALKAFRQLKLTHLSRIDFFLTEEGEILLNEINTFPGMTSISMFPKLLEHHGHRFADYLEQILRKAV.

Residues 120–326 (KLWLSAIGIP…FADYLEQILR (207 aa)) enclose the ATP-grasp domain. 150-205 (ALAKWGKVFIKAASQGSSVGCYSASNEADLVKGIADAFGYSEQVLIEKAVKPRELE) provides a ligand contact to ATP. Mg(2+)-binding residues include aspartate 280, glutamate 293, and asparagine 295.

It belongs to the D-alanine--D-alanine ligase family. It depends on Mg(2+) as a cofactor. Mn(2+) serves as cofactor.

It is found in the cytoplasm. It carries out the reaction 2 D-alanine + ATP = D-alanyl-D-alanine + ADP + phosphate + H(+). It functions in the pathway cell wall biogenesis; peptidoglycan biosynthesis. In terms of biological role, cell wall formation. The chain is D-alanine--D-alanine ligase from Aeromonas hydrophila subsp. hydrophila (strain ATCC 7966 / DSM 30187 / BCRC 13018 / CCUG 14551 / JCM 1027 / KCTC 2358 / NCIMB 9240 / NCTC 8049).